A 180-amino-acid polypeptide reads, in one-letter code: Vacuolar ATPase assembly protein VMA22 (180 aa).

Residues 16–37 (QLLGDLEELEGKRTVLNARVEE) adopt a coiled-coil conformation. Residues 92 to 101 (EEVGPREAGL) show a composition bias toward basic and acidic residues. The disordered stretch occupies residues 92–122 (EEVGPREAGLRRRKGPTKTPEPESSEAPQDP). Residues 153 to 176 (SLQNRIDWGRSQLRGLQEKLKQLE) adopt a coiled-coil conformation.

In terms of assembly, accessory component of the multisubunit proton-transporting vacuolar (V)-ATPase protein pump. In terms of tissue distribution, expressed throughout the brain.

It localises to the endosome. The protein resides in the lysosome. The protein localises to the endoplasmic reticulum-Golgi intermediate compartment. It is found in the cytoplasmic vesicle. Its subcellular location is the COPI-coated vesicle. It localises to the endoplasmic reticulum. Accessory component of the proton-transporting vacuolar (V)-ATPase protein pump involved in intracellular iron homeostasis. In aerobic conditions, required for intracellular iron homeostasis, thus triggering the activity of Fe(2+) prolyl hydroxylase (PHD) enzymes, and leading to HIF1A hydroxylation and subsequent proteasomal degradation. Necessary for endolysosomal acidification and lysosomal degradation. May be involved in Golgi homeostasis. The polypeptide is Vacuolar ATPase assembly protein VMA22 (Homo sapiens (Human)).